Consider the following 1238-residue polypeptide: Anion exchange protein 2 (1238 aa).

The segment at 1-238 is disordered; the sequence is MSGTPRRPAS…YNLQERRRIG (238 aa). Residues 1-704 are Cytoplasmic-facing; it reads MSGTPRRPAS…SDFRDALDPQ (704 aa). 2 stretches are compositionally biased toward basic and acidic residues: residues 37 to 49 and 58 to 75; these read DLHR…RFEE and GGEE…EYHR. 2 stretches are compositionally biased toward basic residues: residues 76–85 and 94–110; these read QSSHHIHHPL and RRRK…RRRP. Residues 120–133 show a composition bias toward acidic residues; it reads TIEEGEEDEDETSE. 4 positions are modified to phosphoserine: S132, S144, S170, and S172. A compositionally biased stretch (polar residues) spans 141–154; it reads TDPSPASTPTSVQF. The span at 205–215 shows a compositional bias: gly residues; the sequence is GTAGGDDGGAS. S239 carries the post-translational modification Phosphoserine. Residue T253 is modified to Phosphothreonine. An N6-methyllysine modification is found at K270. Residues 277 to 315 are disordered; that stretch reads VPGVRRHLVRKNAKGSSQSSREGREPGPTPRTRPRAPHK. Basic residues predominate over residues 280–289; sequence VRRHLVRKNA. Position 439 is a phosphoserine (S439). A disordered region spans residues 445 to 466; sequence SLLGHHHTQGAESDPHVTEPLI. Helical transmembrane passes span 705–728, 734–771, 791–813, and 823–844; these read CLAA…GLLG, LIGV…LLVF, VWIG…SFLV, and IFAF…VKIF. The interval 705 to 1238 is membrane (anion exchange); it reads CLAAVIFIYF…DEYNEMPMPV (534 aa). The Extracellular portion of the chain corresponds to 845 to 897; that stretch reads QEHPLHGCLASNSSEADGGKNTTWTEAAPTPGHGNTSSAEQAGVERPQGQPNT. 3 N-linked (GlcNAc...) asparagine glycosylation sites follow: N856, N865, and N879. Residues 858 to 869 are compositionally biased toward polar residues; sequence SEADGGKNTTWT. Residues 858–892 form a disordered region; that stretch reads SEADGGKNTTWTEAAPTPGHGNTSSAEQAGVERPQ. A helical membrane pass occupies residues 898–915; it reads ALLSLVLMAGTFFIAFFL. Over 916–930 the chain is Cytoplasmic; it reads RKFKNSRFFPGRIRR. The next 5 helical transmembrane spans lie at 931–951, 985–1007, 1033–1054, 1088–1133, and 1160–1196; these read VIGD…DYSI, PFPV…LIFM, LLLI…LAAA, VTGL…IQFY, and MHLF…TVPL. A lipid anchor (S-palmitoyl cysteine) is attached at C1170.

This sequence belongs to the anion exchanger (TC 2.A.31) family. Expressed in the cochlea (at protein level).

The protein resides in the apical cell membrane. It is found in the basolateral cell membrane. The catalysed reaction is hydrogencarbonate(in) + chloride(out) = hydrogencarbonate(out) + chloride(in). Functionally, sodium-independent anion exchanger which mediates the electroneutral exchange of chloride for bicarbonate ions across the cell membrane. Plays an important role in osteoclast differentiation and function. Regulates bone resorption and calpain-dependent actin cytoskeleton organization in osteoclasts via anion exchange-dependent control of pH. Essential for intracellular pH regulation in CD8(+) T-cells upon CD3 stimulation, modulating CD8(+) T-cell response. This is Anion exchange protein 2 (SLC4A2) from Cavia porcellus (Guinea pig).